Reading from the N-terminus, the 956-residue chain is Glutamate receptor ionotropic, kainate 4 (956 aa).

The first 20 residues, Met-1–Cys-20, serve as a signal peptide directing secretion. Residues Ser-21–Pro-545 lie on the Extracellular side of the membrane. 8 N-linked (GlcNAc...) asparagine glycosylation sites follow: Asn-158, Asn-220, Asn-272, Asn-286, Asn-323, Asn-408, Asn-415, and Asn-479. Positions 500, 502, and 507 each coordinate L-glutamate. A helical transmembrane segment spans residues Gly-546 to Ala-566. At Arg-567–Gly-623 the chain is on the cytoplasmic side. Residues Val-624–Leu-644 form a helical membrane-spanning segment. Topologically, residues Thr-645–Asn-804 are extracellular. L-glutamate-binding residues include Ser-674, Ser-675, and Glu-723. Asn-736 is a glycosylation site (N-linked (GlcNAc...) asparagine). Residues Ile-805 to Leu-825 form a helical membrane-spanning segment. Residues Glu-826–Glu-956 lie on the Cytoplasmic side of the membrane. 2 disordered regions span residues Arg-863–Asn-889 and Leu-931–Glu-956. Residues Arg-939–Lys-948 are compositionally biased toward basic and acidic residues.

It belongs to the glutamate-gated ion channel (TC 1.A.10.1) family. GRIK4 subfamily. As to quaternary structure, homodimer. Can form functional heteromeric receptors with GRIK1, GRIK2 and GRIK3.

The protein resides in the cell membrane. The protein localises to the postsynaptic cell membrane. Its subcellular location is the presynaptic cell membrane. Functionally, ionotropic glutamate receptor that functions as a cation-permeable ligand-gated ion channel. Cannot form functional channels on its own. Shows channel activity only in heteromeric assembly with GRIK1, GRIK2 and GRIK3 subunits. The chain is Glutamate receptor ionotropic, kainate 4 (GRIK4) from Homo sapiens (Human).